We begin with the raw amino-acid sequence, 100 residues long: Signal recognition particle 19 kDa protein (100 aa).

It belongs to the SRP19 family. As to quaternary structure, part of the signal recognition particle protein translocation system, which is composed of SRP and FtsY. Archaeal SRP consists of a 7S RNA molecule of 300 nucleotides and two protein subunits: SRP54 and SRP19.

It localises to the cytoplasm. Involved in targeting and insertion of nascent membrane proteins into the cytoplasmic membrane. Binds directly to 7S RNA and mediates binding of the 54 kDa subunit of the SRP. The polypeptide is Signal recognition particle 19 kDa protein (Caldivirga maquilingensis (strain ATCC 700844 / DSM 13496 / JCM 10307 / IC-167)).